A 409-amino-acid polypeptide reads, in one-letter code: Serine/threonine transporter SstT (409 aa).

Helical transmembrane passes span 15 to 35 (LSLVTQIVIGLIAGIALALLA), 49 to 69 (FVSALKAVAPILVFVLVMASI), 82 to 102 (PILVLYLLGTFAAAVVAVIAS), 142 to 162 (ALMNANFIGILAWAIGMGVAI), 193 to 213 (LGIFGLVASTLATSGFNALLG), 218 to 238 (LAVLIGCMLFVALVMNPLIVF), 301 to 321 (GAAITITVLTLAAVHTLGIAV), 331 to 351 (VVAAICACGASGVAGGSLLLI), and 357 to 377 (LFGIPSEIAMQVVAVGFIIGV).

Belongs to the dicarboxylate/amino acid:cation symporter (DAACS) (TC 2.A.23) family.

It is found in the cell inner membrane. The catalysed reaction is L-serine(in) + Na(+)(in) = L-serine(out) + Na(+)(out). It carries out the reaction L-threonine(in) + Na(+)(in) = L-threonine(out) + Na(+)(out). Functionally, involved in the import of serine and threonine into the cell, with the concomitant import of sodium (symport system). This is Serine/threonine transporter SstT from Pseudomonas fluorescens (strain ATCC BAA-477 / NRRL B-23932 / Pf-5).